The primary structure comprises 284 residues: GPN-loop GTPase 3 (284 aa).

13–18 contacts GTP; it reads GSGKST. The Gly-Pro-Asn (GPN)-loop; involved in dimer interface motif lies at 72–74; it reads GPN. GTP is bound at residue 174–177; it reads TKMD. The tract at residues 261-284 is disordered; it reads KEPKEHEDESSSMFDEYFQEHQNE.

Belongs to the GPN-loop GTPase family. Heterodimer with GPN1. Binds to RNA polymerase II (RNAPII). Interacts directly with subunits RPB4 and RPB7 and the CTD of RPB1.

In terms of biological role, small GTPase required for proper localization of RNA polymerase II (RNAPII). May act at an RNAP assembly step prior to nuclear import. The protein is GPN-loop GTPase 3 of Bos taurus (Bovine).